The sequence spans 557 residues: Copine-6 (557 aa).

2 C2 domains span residues 2–127 (SDPE…TKPL) and 134–263 (TAGK…MQWD). The Ca(2+) site is built by aspartate 167, aspartate 173, aspartate 229, aspartate 231, and aspartate 237. Residues 244–303 (STFQEMQEGTANPGQEMQWDCINPKYRDKKKNYKSSGTVVLAQCTVEKVHTFLDYIMGGC) form a linker region region. Residues 306-526 (SFTVAIDFTA…ALAKRVLAEV (221 aa)) form the VWFA domain.

This sequence belongs to the copine family. In terms of assembly, interacts (via second C2 domain) with OS9 (via C-terminus); this interaction occurs in a calcium-dependent manner in vitro. May interact with NECAB1. The cofactor is Ca(2+).

It localises to the cytoplasm. Its subcellular location is the cell membrane. The protein localises to the endosome. It is found in the cytoplasmic vesicle. The protein resides in the clathrin-coated vesicle. It localises to the perikaryon. Its subcellular location is the cell projection. The protein localises to the dendrite. Its function is as follows. Calcium-dependent phospholipid-binding protein that plays a role in calcium-mediated intracellular processes. Binds phospholipid membranes in a calcium-dependent manner. Plays a role in dendrite formation by melanocytes. The polypeptide is Copine-6 (Pongo abelii (Sumatran orangutan)).